The sequence spans 227 residues: UPF0758 protein Dhaf_4352 (227 aa).

The MPN domain maps to 105–227 (VINSPQDIAH…YISLKERGIL (123 aa)). Histidine 176, histidine 178, and aspartate 189 together coordinate Zn(2+). Positions 176 to 189 (HNHPSGDPTPSSED) match the JAMM motif motif.

Belongs to the UPF0758 family.

The polypeptide is UPF0758 protein Dhaf_4352 (Desulfitobacterium hafniense (strain DSM 10664 / DCB-2)).